The chain runs to 726 residues: WD repeat and coiled-coil-containing protein (726 aa).

2 WD repeats span residues 55-98 and 154-194; these read GQFE…SDKN and KSSG…LNAC. The segment at 502–574 is disordered; the sequence is RSYDGDQSPT…PNFIQPSDVS (73 aa). Residues 506-515 are compositionally biased toward polar residues; the sequence is GDQSPTSSAN. A compositionally biased stretch (basic and acidic residues) spans 517 to 533; it reads FDEKRNRLRMESFDTEP. The span at 550–574 shows a compositional bias: polar residues; sequence SGSTSPKSECQNSSPPNFIQPSDVS. Residues 581–609 are a coiled coil; it reads SISRNVERLCCNFAHLQQHLSELTDITRN.

The polypeptide is WD repeat and coiled-coil-containing protein (wdcp) (Xenopus laevis (African clawed frog)).